Here is a 466-residue protein sequence, read N- to C-terminus: MNGALGNSSASVSGGEGAGGPAPFLVKTYEMVDDSSTDQIVSWSANNNSFIVWNHAEFSRLLLPTYFKHNNFSSFIRQLNTYGFRKIDPERWEFLNDDFIKDQKHLLKNIHRRKPIHSHSHPPASSTDQERAVLQEQMDKLSREKAAIEAKLLKFKQQKVVAKHQFEEMTEHVDDMENRQKKLLNFLETAIRNPTFVKNFGKKVEQLDISAYNKKRRLPEVEQSKPPSEDSHLDNSSGSSRRESGNIFHQNFSNKLRLELSPADSDMNMVSHSIQSSNEEGASPKGILSGGDPNTTLTKREGLPFAPEALELADTGTCPRRLLLNDNTRVETLQQRLTSSEETDGSFSCHLNLTLASAPLPDKTASQIAKTTLKSQELNFNSIETSASEKNRGRQEIAVGGSQANAAPPARVNDVFWEQFLTERPGSSDNEEASSTYRGNPYEEQEEKRNGSMMLRNTKNIEQLTL.

The DNA-binding element occupies 21-115 (PAPFLVKTYE…LLKNIHRRKP (95 aa)). The segment at 125–191 (SSTDQERAVL…KLLNFLETAI (67 aa)) is hydrophobic repeat HR-A/B. The Bipartite nuclear localization signal signature appears at 198-217 (KNFGKKVEQLDISAYNKKRR). Disordered stretches follow at residues 215–248 (KRRLPEVEQSKPPSEDSHLDNSSGSSRRESGNIF), 272–300 (HSIQSSNEEGASPKGILSGGDPNTTLTKR), and 422–466 (TERP…QLTL). The span at 218–233 (LPEVEQSKPPSEDSHL) shows a compositional bias: basic and acidic residues. Residues 414-423 (DVFWEQFLTE) carry the AHA motif. Composition is skewed to polar residues over residues 425-438 (PGSSDNEEASSTYR) and 455-466 (LRNTKNIEQLTL). Positions 461-466 (IEQLTL) match the Nuclear export signal motif.

This sequence belongs to the HSF family. Class A subfamily. In terms of assembly, homotrimer. Exhibits temperature-dependent phosphorylation.

It localises to the cytoplasm. The protein localises to the nucleus. In terms of biological role, transcriptional activator that specifically binds DNA sequence 5'-AGAAnnTTCT-3' known as heat shock promoter elements (HSE). The protein is Heat stress transcription factor A-5 (HSFA5) of Arabidopsis thaliana (Mouse-ear cress).